We begin with the raw amino-acid sequence, 240 residues long: Lysoplasmalogenase TMEM86A (240 aa).

Residues 1-21 (MVSPVTVVKSEGPKLVPFFKA) are Cytoplasmic-facing. The helical transmembrane segment at 22-42 (TCVYFVLWLPSSSPSWVSALI) threads the bilayer. Position 43 (lysine 43) is a topological domain, extracellular. The chain crosses the membrane as a helical span at residues 44-64 (CLPIFCLWLFLLAHGLGFLLT). Residues 65–70 (HPSATR) are Cytoplasmic-facing. The helical transmembrane segment at 71 to 91 (IFVGLVFSAIGDAFLIWQDQG) threads the bilayer. Position 92 (tyrosine 92) is a topological domain, extracellular. A helical transmembrane segment spans residues 93–113 (FVHGMLMFAVTHMLYASAFGM). Residues 114-115 (RP) are Cytoplasmic-facing. The chain crosses the membrane as a helical span at residues 116–136 (LGLRTGLLMVILSGLCYAFLY). Over 137-138 (PN) the chain is Extracellular. Residues 139-159 (LTGAFTYVVGVYVAIIGFMGW) form a helical membrane-spanning segment. The Cytoplasmic portion of the chain corresponds to 160–174 (RAMAGLQLVGAAWRW). Residues 175 to 195 (TELAAGTGALLFIVSDLTIAL) traverse the membrane as a helical segment. Residues 196 to 206 (DKFCFPVPYSR) are Extracellular-facing. The chain crosses the membrane as a helical span at residues 207-227 (ALIMSTYYAAQMLIALSAVES). Over 228–240 (REPVEDYRLSKAK) the chain is Cytoplasmic.

It belongs to the TMEM86 family.

The protein resides in the endoplasmic reticulum membrane. It carries out the reaction a 1-O-(1Z-alkenyl)-sn-glycero-3-phosphocholine + H2O = a 2,3-saturated aldehyde + sn-glycerol 3-phosphocholine. The catalysed reaction is a 1-O-(1Z-alkenyl)-sn-glycero-3-phosphoethanolamine + H2O = a 2,3-saturated aldehyde + sn-glycero-3-phosphoethanolamine. Catalyzes the hydrolysis of the vinyl ether bond of choline or ethanolamine lysoplasmalogens, forming fatty aldehyde and glycerophosphocholine or glycerophosphoethanolamine, respectively and is specific for the sn-2-deacylated (lyso) form of plasmalogen. Plays an important role in lysoplasmalogen metabolism in the adipocyte tissue and macrophages. This chain is Lysoplasmalogenase TMEM86A (TMEM86A), found in Bos taurus (Bovine).